The sequence spans 167 residues: S-ribosylhomocysteine lyase (167 aa).

Fe cation-binding residues include histidine 54, histidine 58, and cysteine 128.

It belongs to the LuxS family. Homodimer. Fe cation serves as cofactor.

The enzyme catalyses S-(5-deoxy-D-ribos-5-yl)-L-homocysteine = (S)-4,5-dihydroxypentane-2,3-dione + L-homocysteine. Involved in the synthesis of autoinducer 2 (AI-2) which is secreted by bacteria and is used to communicate both the cell density and the metabolic potential of the environment. The regulation of gene expression in response to changes in cell density is called quorum sensing. Catalyzes the transformation of S-ribosylhomocysteine (RHC) to homocysteine (HC) and 4,5-dihydroxy-2,3-pentadione (DPD). In Sulfurimonas denitrificans (strain ATCC 33889 / DSM 1251) (Thiomicrospira denitrificans (strain ATCC 33889 / DSM 1251)), this protein is S-ribosylhomocysteine lyase.